The following is a 61-amino-acid chain: Hepcidin (61 aa).

The tract at residues 1–24 (LQVLTEEVGSIDSPVGEHQQPGGE) is disordered. Positions 1 to 34 (LQVLTEEVGSIDSPVGEHQQPGGESMRLPEHFRF) are excised as a propeptide. 4 disulfide bridges follow: C43-C59, C46-C49, C47-X55, and C50-C58.

This sequence belongs to the hepcidin family.

It localises to the secreted. In terms of biological role, seems to act as a signaling molecule involved in the maintenance of iron homeostasis. Seems to be required in conjunction with HFE to regulate both intestinal iron absorption and iron storage in macrophages. May also have antimicrobial activity. The protein is Hepcidin (hamp) of Oncorhynchus mykiss (Rainbow trout).